Reading from the N-terminus, the 417-residue chain is Serine hydroxymethyltransferase (417 aa).

(6S)-5,6,7,8-tetrahydrofolate contacts are provided by residues Leu121 and 125-127; that span reads GHL. N6-(pyridoxal phosphate)lysine is present on Lys229. 355-357 lines the (6S)-5,6,7,8-tetrahydrofolate pocket; it reads SPF.

It belongs to the SHMT family. As to quaternary structure, homodimer. Pyridoxal 5'-phosphate serves as cofactor.

The protein resides in the cytoplasm. The catalysed reaction is (6R)-5,10-methylene-5,6,7,8-tetrahydrofolate + glycine + H2O = (6S)-5,6,7,8-tetrahydrofolate + L-serine. It functions in the pathway one-carbon metabolism; tetrahydrofolate interconversion. Its pathway is amino-acid biosynthesis; glycine biosynthesis; glycine from L-serine: step 1/1. Catalyzes the reversible interconversion of serine and glycine with tetrahydrofolate (THF) serving as the one-carbon carrier. This reaction serves as the major source of one-carbon groups required for the biosynthesis of purines, thymidylate, methionine, and other important biomolecules. Also exhibits THF-independent aldolase activity toward beta-hydroxyamino acids, producing glycine and aldehydes, via a retro-aldol mechanism. This is Serine hydroxymethyltransferase from Citrobacter koseri (strain ATCC BAA-895 / CDC 4225-83 / SGSC4696).